A 66-amino-acid polypeptide reads, in one-letter code: DNA-directed RNA polymerase subunit Rpo10 (66 aa).

Zn(2+) contacts are provided by Cys7, Cys10, Cys44, and Cys45.

This sequence belongs to the archaeal Rpo10/eukaryotic RPB10 RNA polymerase subunit family. In terms of assembly, part of the RNA polymerase complex. The cofactor is Zn(2+).

The protein resides in the cytoplasm. The catalysed reaction is RNA(n) + a ribonucleoside 5'-triphosphate = RNA(n+1) + diphosphate. DNA-dependent RNA polymerase (RNAP) catalyzes the transcription of DNA into RNA using the four ribonucleoside triphosphates as substrates. The chain is DNA-directed RNA polymerase subunit Rpo10 from Pyrobaculum neutrophilum (strain DSM 2338 / JCM 9278 / NBRC 100436 / V24Sta) (Thermoproteus neutrophilus).